Consider the following 611-residue polypeptide: Dihydroxy-acid dehydratase (611 aa).

Residue Asp81 participates in Mg(2+) binding. Cys122 contributes to the [2Fe-2S] cluster binding site. Positions 123 and 124 each coordinate Mg(2+). At Lys124 the chain carries N6-carboxylysine. Cys195 contacts [2Fe-2S] cluster. Glu491 is a binding site for Mg(2+). Ser517 (proton acceptor) is an active-site residue.

Belongs to the IlvD/Edd family. Homodimer. The cofactor is [2Fe-2S] cluster. Mg(2+) is required as a cofactor.

It carries out the reaction (2R)-2,3-dihydroxy-3-methylbutanoate = 3-methyl-2-oxobutanoate + H2O. The enzyme catalyses (2R,3R)-2,3-dihydroxy-3-methylpentanoate = (S)-3-methyl-2-oxopentanoate + H2O. Its pathway is amino-acid biosynthesis; L-isoleucine biosynthesis; L-isoleucine from 2-oxobutanoate: step 3/4. It functions in the pathway amino-acid biosynthesis; L-valine biosynthesis; L-valine from pyruvate: step 3/4. Functionally, functions in the biosynthesis of branched-chain amino acids. Catalyzes the dehydration of (2R,3R)-2,3-dihydroxy-3-methylpentanoate (2,3-dihydroxy-3-methylvalerate) into 2-oxo-3-methylpentanoate (2-oxo-3-methylvalerate) and of (2R)-2,3-dihydroxy-3-methylbutanoate (2,3-dihydroxyisovalerate) into 2-oxo-3-methylbutanoate (2-oxoisovalerate), the penultimate precursor to L-isoleucine and L-valine, respectively. This chain is Dihydroxy-acid dehydratase, found in Brucella suis (strain ATCC 23445 / NCTC 10510).